Here is a 95-residue protein sequence, read N- to C-terminus: Small ribosomal subunit protein bS6 (95 aa).

The protein belongs to the bacterial ribosomal protein bS6 family.

Its function is as follows. Binds together with bS18 to 16S ribosomal RNA. This chain is Small ribosomal subunit protein bS6, found in Corynebacterium diphtheriae (strain ATCC 700971 / NCTC 13129 / Biotype gravis).